The following is a 537-amino-acid chain: Putative cysteine ligase BshC (537 aa).

A coiled-coil region spans residues 415 to 439 (EKASNNFINEVEEMKIQQQELYNNL).

Belongs to the BshC family.

Functionally, involved in bacillithiol (BSH) biosynthesis. May catalyze the last step of the pathway, the addition of cysteine to glucosamine malate (GlcN-Mal) to generate BSH. This Staphylococcus epidermidis (strain ATCC 12228 / FDA PCI 1200) protein is Putative cysteine ligase BshC.